An 835-amino-acid chain; its full sequence is Telomere length regulation protein TEL2 homolog (835 aa).

2 disordered regions span residues 455–501 (SADC…LAPY) and 629–648 (LSHE…HSIR). A compositionally biased stretch (low complexity) spans 464 to 473 (ESSPSKSCPK). Over residues 474-486 (AIEKSKMEAKADQ) the composition is skewed to basic and acidic residues. Residues 488-499 (SDSELDSDDDLA) show a composition bias toward acidic residues. Residues 636-648 (ESRSTGTGQHSIR) show a composition bias toward polar residues.

It belongs to the TEL2 family.

The protein resides in the cytoplasm. Its subcellular location is the membrane. It is found in the nucleus. It localises to the chromosome. The protein localises to the telomere. In terms of biological role, regulator of the DNA damage response (DDR). Part of the TTT complex that is required to stabilize protein levels of the phosphatidylinositol 3-kinase-related protein kinase (PIKK) family proteins. Promotes assembly, stabilizes and maintains the activity of TORC complexes, which regulate cell growth and survival in response to nutrient and hormonal signals. May be involved in telomere length regulation. This Xenopus laevis (African clawed frog) protein is Telomere length regulation protein TEL2 homolog (telo2).